We begin with the raw amino-acid sequence, 213 residues long: Ras-related protein Rab-39B (213 aa).

S17, G20, K21, S22, C23, S37, and T40 together coordinate GTP. S22 is a binding site for Mg(2+). A switch-I region spans residues 35-43; it reads QVSDPTVGV. Mg(2+) is bound by residues T40 and D64. Positions 67, 123, 124, 126, 154, and 155 each coordinate GTP. The segment at 67-83 is switch-II; it reads GQERFRSITRAYYRNSV. S201 bears the Phosphoserine mark. 2 S-geranylgeranyl cysteine lipidation sites follow: C211 and C213. Residue C213 is modified to Cysteine methyl ester.

Belongs to the small GTPase superfamily. Rab family. Interacts (GDP-bound) with C9orf72; C9orf72 in complex with SMCR8 acts as a GEF for RAB39B. Interacts (in GTP-bound form) with PICK1 (via PDZ domain); a PICK1 homodimer may allow simultaneous association of RAB39B and GRIA2 to PICK1 which is involved in GRIA2 trafficking. Interacts with isoform c of RASSF1; the interaction is strong. Interacts with isoform a of RASSF1; the interaction is weak. Interacts with the DLG4/PSD-95. Interacts (GTP-bound) with HOPS complex components VPS39 and VPS41. The cofactor is Mg(2+). As to expression, highly expressed in the brain.

Its subcellular location is the cell membrane. The protein resides in the cytoplasmic vesicle membrane. It localises to the golgi apparatus. The protein localises to the cytoplasmic vesicle. It is found in the autophagosome membrane. Its subcellular location is the autolysosome membrane. The enzyme catalyses GTP + H2O = GDP + phosphate + H(+). With respect to regulation, regulated by guanine nucleotide exchange factors (GEFs) including C9orf72-SMCR8 complex, which promote the exchange of bound GDP for free GTP. Regulated by GTPase activating proteins (GAPs) which increase the GTP hydrolysis activity. Inhibited by GDP dissociation inhibitors (GDIs). Functionally, the small GTPases Rab are key regulators of intracellular membrane trafficking, from the formation of transport vesicles to their fusion with membranes. Rabs cycle between an inactive GDP-bound form and an active GTP-bound form that is able to recruit to membranes different sets of downstream effectors directly responsible for vesicle formation, movement, tethering and fusion. RAB39B is involved in autophagy and may function in autophagosome formation. Binds downstream effector PICK1 to ensure selectively GRIA2 exit from the endoplasmic reticulum to the Golgi and to regulate AMPAR composition at the post-synapses and thus synaptic transmission. May regulate the homeostasis of SNCA/alpha-synuclein. The chain is Ras-related protein Rab-39B from Homo sapiens (Human).